The chain runs to 495 residues: Anaerobic nitric oxide reductase flavorubredoxin (495 aa).

The segment at 30–210 (HKGTSYNSYL…PFSPLVTAKI (181 aa)) is zinc metallo-hydrolase. The Fe cation site is built by histidine 79, glutamate 81, aspartate 83, histidine 147, aspartate 166, and histidine 227. The Flavodoxin-like domain maps to 254 to 393 (ITLFYDSMSN…ECREHGRQLA (140 aa)). FMN contacts are provided by residues 260–264 (SMSNN) and 342–369 (AFGS…DISI). The region spanning 438–489 (DQAMLCTVCQWVYDPAQGEPDQLVAPGTPWAQVPDSFLCPGCGIGKEVFEPC) is the Rubredoxin-like domain. 4 residues coordinate Fe cation: cysteine 443, cysteine 446, cysteine 476, and cysteine 479.

This sequence in the N-terminal section; belongs to the zinc metallo-hydrolase group 3 family. In terms of assembly, homotetramer. Fe cation serves as cofactor. It depends on FMN as a cofactor.

Its subcellular location is the cytoplasm. It participates in nitrogen metabolism; nitric oxide reduction. Functionally, anaerobic nitric oxide reductase; uses NADH to detoxify nitric oxide (NO), protecting several 4Fe-4S NO-sensitive enzymes. Has at least 2 reductase partners, only one of which (NorW, flavorubredoxin reductase) has been identified. NO probably binds to the di-iron center; electrons enter from the NorW at rubredoxin and are transferred sequentially to the FMN center and the di-iron center. Also able to function as an aerobic oxygen reductase. This is Anaerobic nitric oxide reductase flavorubredoxin from Aeromonas hydrophila subsp. hydrophila (strain ATCC 7966 / DSM 30187 / BCRC 13018 / CCUG 14551 / JCM 1027 / KCTC 2358 / NCIMB 9240 / NCTC 8049).